Here is a 1067-residue protein sequence, read N- to C-terminus: DNA-directed RNA polymerase subunit beta (1067 aa).

Belongs to the RNA polymerase beta chain family. As to quaternary structure, in plastids the minimal PEP RNA polymerase catalytic core is composed of four subunits: alpha, beta, beta', and beta''. When a (nuclear-encoded) sigma factor is associated with the core the holoenzyme is formed, which can initiate transcription.

The protein resides in the plastid. It is found in the chloroplast. It catalyses the reaction RNA(n) + a ribonucleoside 5'-triphosphate = RNA(n+1) + diphosphate. In terms of biological role, DNA-dependent RNA polymerase catalyzes the transcription of DNA into RNA using the four ribonucleoside triphosphates as substrates. This Ipomoea purpurea (Common morning glory) protein is DNA-directed RNA polymerase subunit beta.